Consider the following 250-residue polypeptide: Probable chemoreceptor glutamine deamidase CheD (250 aa).

Belongs to the CheD family.

It catalyses the reaction L-glutaminyl-[protein] + H2O = L-glutamyl-[protein] + NH4(+). Probably deamidates glutamine residues to glutamate on methyl-accepting chemotaxis receptors (MCPs), playing an important role in chemotaxis. In Paraburkholderia xenovorans (strain LB400), this protein is Probable chemoreceptor glutamine deamidase CheD.